The following is a 586-amino-acid chain: Phosphomethylpyrimidine synthase (586 aa).

Positions 1–58 are disordered; sequence MKQSVSAEQIELKSSLPGSKKVYVDGPREGMKVPMREIEQSDTNGVPNPPIRVYDTSG. The span at 22-39 shows a compositional bias: basic and acidic residues; the sequence is VYVDGPREGMKVPMREIE. Substrate-binding positions include N193, M222, Y251, H287, 307-309, 348-351, and E387; these read SRG and DGLR. Zn(2+) is bound at residue H391. Y414 provides a ligand contact to substrate. Residue H455 participates in Zn(2+) binding. [4Fe-4S] cluster is bound by residues C535, C538, and C543.

Belongs to the ThiC family. [4Fe-4S] cluster is required as a cofactor.

The enzyme catalyses 5-amino-1-(5-phospho-beta-D-ribosyl)imidazole + S-adenosyl-L-methionine = 4-amino-2-methyl-5-(phosphooxymethyl)pyrimidine + CO + 5'-deoxyadenosine + formate + L-methionine + 3 H(+). It participates in cofactor biosynthesis; thiamine diphosphate biosynthesis. Its function is as follows. Catalyzes the synthesis of the hydroxymethylpyrimidine phosphate (HMP-P) moiety of thiamine from aminoimidazole ribotide (AIR) in a radical S-adenosyl-L-methionine (SAM)-dependent reaction. The polypeptide is Phosphomethylpyrimidine synthase (Bacillus anthracis (strain A0248)).